We begin with the raw amino-acid sequence, 227 residues long: E3 ubiquitin-protein ligase ZNRF1 (227 aa).

The segment at methionine 1 to arginine 38 is disordered. Glycine 2 carries the N-myristoyl glycine lipid modification. Residues glycine 2 to arginine 10 are required for endosomal and lysosomal localization and myristoylation. Phosphoserine occurs at positions 50, 52, and 53. The interval arginine 77–glutamate 105 is disordered. The residue at position 103 (tyrosine 103) is a Phosphotyrosine. A Phosphoserine modification is found at serine 123. Residues cysteine 184–proline 225 form an RING-type; atypical zinc finger.

In terms of assembly, interacts with AKT1, GLUL and TUBB2A. Interacts with ZNRF2. Interacts (via its RING domain) with UBE2N. Interacts (when phosphorylated) with YWHAE. In terms of processing, N-myristoylation targets ZNRF1 to intracellular membranes. Phosphorylated by SRC at Tyr-103; leading to 'Lys-63'-linked ubiquitination of TLR3, lysosomal trafficking and degradation.

The protein localises to the endosome. It is found in the lysosome. Its subcellular location is the membrane. The protein resides in the cytoplasmic vesicle. It localises to the secretory vesicle. The protein localises to the synaptic vesicle membrane. It catalyses the reaction S-ubiquitinyl-[E2 ubiquitin-conjugating enzyme]-L-cysteine + [acceptor protein]-L-lysine = [E2 ubiquitin-conjugating enzyme]-L-cysteine + N(6)-ubiquitinyl-[acceptor protein]-L-lysine.. The protein operates within protein modification; protein ubiquitination. E3 ubiquitin-protein ligase that plays a role in different processes including cell differentiation, receptor recycling or regulation of inflammation. Mediates the ubiquitination of AKT1 and GLUL, thereby playing a role in neuron cells differentiation. Plays a role in the establishment and maintenance of neuronal transmission and plasticity. Regulates Schwann cells differentiation by mediating ubiquitination of GLUL. Promotes neurodegeneration by mediating 'Lys-48'-linked polyubiquitination and subsequent degradation of AKT1 in axons: degradation of AKT1 prevents AKT1-mediated phosphorylation of GSK3B, leading to GSK3B activation and phosphorylation of DPYSL2/CRMP2 followed by destabilization of microtubule assembly in axons. Ubiquitinates the Na(+)/K(+) ATPase alpha-1 subunit/ATP1A1 and thereby influences its endocytosis and/or degradation. Controls ligand-induced EGFR signaling via mediating receptor ubiquitination and recruitment of the ESCRT machinery. Acts as a negative feedback mechanism controlling TLR3 trafficking by mediating TLR3 'Lys-63'-linked polyubiquitination to reduce type I IFN production. Modulates inflammation by promoting caveolin-1/CAV1 ubiquitination and degradation to regulate TLR4-activated immune response. In Bos taurus (Bovine), this protein is E3 ubiquitin-protein ligase ZNRF1 (ZNRF1).